The primary structure comprises 2110 residues: Protein Ycf2 (2110 aa).

Residues 190 to 209 form a disordered region; the sequence is DSSQLKGSSDQSRDPLDSIS. Residue 1442-1449 coordinates ATP; that stretch reads GSIGTGRS.

This sequence belongs to the Ycf2 family.

It is found in the plastid. The protein resides in the chloroplast stroma. Its function is as follows. Probable ATPase of unknown function. Its presence in a non-photosynthetic plant (Epifagus virginiana) and experiments in tobacco indicate that it has an essential function which is probably not related to photosynthesis. The sequence is that of Protein Ycf2 from Panax ginseng (Korean ginseng).